Here is a 227-residue protein sequence, read N- to C-terminus: Urease subunit gamma/beta (227 aa).

The interval 1–101 (MRLTPTERDR…LAVVADPVGG (101 aa)) is urease gamma. Residues 102–227 (GGLGDDAPGA…AACGYLGADR (126 aa)) are urease beta.

The protein in the N-terminal section; belongs to the urease gamma subunit family. In the C-terminal section; belongs to the urease beta subunit family. Heterohexamer of 3 UreC (alpha) and 3 UreAB (gamma/beta) subunits.

The protein resides in the cytoplasm. The catalysed reaction is urea + 2 H2O + H(+) = hydrogencarbonate + 2 NH4(+). It participates in nitrogen metabolism; urea degradation; CO(2) and NH(3) from urea (urease route): step 1/1. In Streptomyces coelicolor (strain ATCC BAA-471 / A3(2) / M145), this protein is Urease subunit gamma/beta.